We begin with the raw amino-acid sequence, 381 residues long: Erythronate-4-phosphate dehydrogenase (381 aa).

Substrate contacts are provided by S45 and T66. D146 and T173 together coordinate NAD(+). R206 is a catalytic residue. Position 230 (D230) interacts with NAD(+). Residue E235 is part of the active site. The active-site Proton donor is H252. G255 contributes to the NAD(+) binding site. Y256 serves as a coordination point for substrate.

This sequence belongs to the D-isomer specific 2-hydroxyacid dehydrogenase family. PdxB subfamily. As to quaternary structure, homodimer.

It is found in the cytoplasm. It catalyses the reaction 4-phospho-D-erythronate + NAD(+) = (R)-3-hydroxy-2-oxo-4-phosphooxybutanoate + NADH + H(+). It participates in cofactor biosynthesis; pyridoxine 5'-phosphate biosynthesis; pyridoxine 5'-phosphate from D-erythrose 4-phosphate: step 2/5. Catalyzes the oxidation of erythronate-4-phosphate to 3-hydroxy-2-oxo-4-phosphonooxybutanoate. The protein is Erythronate-4-phosphate dehydrogenase of Hahella chejuensis (strain KCTC 2396).